A 343-amino-acid chain; its full sequence is Biotin synthase (343 aa).

A Radical SAM core domain is found at 36–254 (RQVQVSTLLS…IAVARIMMPR (219 aa)). Cys-51, Cys-55, and Cys-58 together coordinate [4Fe-4S] cluster. [2Fe-2S] cluster is bound by residues Cys-95, Cys-126, Cys-186, and Arg-258.

This sequence belongs to the radical SAM superfamily. Biotin synthase family. Homodimer. Requires [4Fe-4S] cluster as cofactor. It depends on [2Fe-2S] cluster as a cofactor.

It carries out the reaction (4R,5S)-dethiobiotin + (sulfur carrier)-SH + 2 reduced [2Fe-2S]-[ferredoxin] + 2 S-adenosyl-L-methionine = (sulfur carrier)-H + biotin + 2 5'-deoxyadenosine + 2 L-methionine + 2 oxidized [2Fe-2S]-[ferredoxin]. The protein operates within cofactor biosynthesis; biotin biosynthesis; biotin from 7,8-diaminononanoate: step 2/2. Functionally, catalyzes the conversion of dethiobiotin (DTB) to biotin by the insertion of a sulfur atom into dethiobiotin via a radical-based mechanism. The polypeptide is Biotin synthase (Erwinia tasmaniensis (strain DSM 17950 / CFBP 7177 / CIP 109463 / NCPPB 4357 / Et1/99)).